Here is a 271-residue protein sequence, read N- to C-terminus: Putative pirin-like protein At3g59260 (271 aa).

Belongs to the pirin family.

Its subcellular location is the nucleus. The chain is Putative pirin-like protein At3g59260 from Arabidopsis thaliana (Mouse-ear cress).